The chain runs to 74 residues: Protein krueppel (74 aa).

4 C2H2-type zinc fingers span residues 1-4 (ERTH), 10-32 (FECP…MRLH), 38-60 (YHCS…LRVH), and 66-74 (YTCEICDGK).

This sequence belongs to the krueppel C2H2-type zinc-finger protein family.

It localises to the nucleus. Krueppel is a gap class segmentation protein. This Musca domestica (House fly) protein is Protein krueppel (Kr).